Consider the following 666-residue polypeptide: Frizzled-3 (666 aa).

The signal sequence occupies residues 1–22; it reads MAVSWIVFDLWLLTVFLGQIGG. Residues 23–136 form the FZ domain; that stretch reads HSLFSCEPIT…CSRFPDCDEP (114 aa). Residues 23–205 are Extracellular-facing; sequence HSLFSCEPIT…REELSFARYF (183 aa). Cystine bridges form between Cys-28-Cys-89, Cys-36-Cys-82, Cys-73-Cys-110, Cys-99-Cys-133, and Cys-103-Cys-127. N-linked (GlcNAc...) asparagine glycosylation is present at Asn-42. Residues 206 to 226 form a helical membrane-spanning segment; that stretch reads IGLISIICLSATLFTFLTFLI. Topologically, residues 227–237 are cytoplasmic; that stretch reads DVTRFRYPERP. Residues 238–258 traverse the membrane as a helical segment; that stretch reads IIFYAVCYMMVSLIFFIGFLL. Over 259–288 the chain is Extracellular; the sequence is EDRVACNASSPAQYKASTVTQGSHNKACTM. Asn-265 is a glycosylation site (N-linked (GlcNAc...) asparagine). A helical transmembrane segment spans residues 289–309; the sequence is LFMVLYFFTMAGSVWWVILTI. The Cytoplasmic segment spans residues 310-328; it reads TWFLAAVPKWGSEAIEKKA. The chain crosses the membrane as a helical span at residues 329-349; that stretch reads LLFHASAWGIPGTLTIILLAM. The Extracellular portion of the chain corresponds to 350–374; sequence NKIEGDNISGVCFVGLYDVDALRYF. An N-linked (GlcNAc...) asparagine glycan is attached at Asn-356. The helical transmembrane segment at 375 to 395 threads the bilayer; it reads VLAPLCLYVVVGVSLLLAGII. Residues 396–420 lie on the Cytoplasmic side of the membrane; that stretch reads SLNRVRIEIPLEKENQDKLVKFMIR. Residues 421–441 form a helical membrane-spanning segment; that stretch reads IGVFSILYLVPLLVVIGCYFY. Residues 442-477 are Extracellular-facing; it reads EQAYRGIWETTWIQERCREYHIPCPYQVTQMSRPDL. Residues 478–498 traverse the membrane as a helical segment; sequence ILFLMKYLMALIVGIPSIFWV. At 499-666 the chain is on the cytoplasmic side; that stretch reads GSKKTCFEWA…RVIEEDGTSA (168 aa). Residues 502 to 507 carry the Lys-Thr-X-X-X-Trp motif, mediates interaction with the PDZ domain of Dvl family members motif; the sequence is KTCFEW. Residues 538–666 are disordered; the sequence is RDPNTPIIRK…RVIEEDGTSA (129 aa). The segment covering 550–565 has biased composition (polar residues); the sequence is GTSTQGTSTHASSTQL. The segment covering 617-638 has biased composition (basic and acidic residues); it reads LTDHSRHSSSHRLNEQSRHSSI. The segment covering 639–656 has biased composition (polar residues); sequence RDLSNNPMTHITHGTSMN.

The protein belongs to the G-protein coupled receptor Fz/Smo family. Interacts with VANGL2. Post-translationally, ubiquitinated by ZNRF3, leading to its degradation by the proteasome. Expressed in the cortex, diencephalon, rostral brainstem and little or no staining is seen in the striatum or cerebellum. Expressed in both hair cells and supporting cells in the utricle, saccule, cristae and the organ of Corti in the inner ear (at protein level). Highly expressed in the CNS. In skin, it is restricted to the epidermis and to the developing hair follicle.

Its subcellular location is the membrane. It is found in the cell membrane. It localises to the cell surface. The protein resides in the apical cell membrane. Receptor for Wnt proteins. Most of frizzled receptors are coupled to the beta-catenin canonical signaling pathway, which leads to the activation of disheveled proteins, inhibition of GSK-3 kinase, nuclear accumulation of beta-catenin and activation of Wnt target genes. A second signaling pathway involving PKC and calcium fluxes has been seen for some family members, but it is not yet clear if it represents a distinct pathway or if it can be integrated in the canonical pathway, as PKC seems to be required for Wnt-mediated inactivation of GSK-3 kinase. Both pathways seem to involve interactions with G-proteins. Activation by Wnt5A stimulates PKC activity via a G-protein-dependent mechanism. Involved in transduction and intercellular transmission of polarity information during tissue morphogenesis and/or in differentiated tissues. Plays a role in controlling early axon growth and guidance processes necessary for the formation of a subset of central and peripheral major fiber tracts. Required for the development of major fiber tracts in the central nervous system, including: the anterior commissure, the corpus callosum, the thalamocortical, corticothalamic and nigrostriatal tracts, the corticospinal tract, the fasciculus retroflexus, the mammillothalamic tract, the medial lemniscus, and ascending fiber tracts from the spinal cord to the brain. In the peripheral nervous system, controls axon growth in distinct populations of cranial and spinal motor neurons, including the facial branchimotor nerve, the hypoglossal nerve, the phrenic nerve, and motor nerves innervating dorsal limbs. Involved in the migration of cranial neural crest cells. May also be implicated in the transmission of sensory information from the trunk and limbs to the brain. Controls commissural sensory axons guidance after midline crossing along the anterior-posterior axis in the developing spinal cord in a Wnt-dependent signaling pathway. Together with FZD6, is involved in the neural tube closure and plays a role in the regulation of the establishment of planar cell polarity (PCP), particularly in the orientation of asymmetric bundles of stereocilia on the apical faces of a subset of auditory and vestibular sensory cells located in the inner ear. Promotes neurogenesis by maintaining sympathetic neuroblasts within the cell cycle in a beta-catenin-dependent manner. The polypeptide is Frizzled-3 (Fzd3) (Mus musculus (Mouse)).